The primary structure comprises 1187 residues: Probable histidine kinase 5 (1187 aa).

The Extracellular portion of the chain corresponds to 1 to 175 (MSRVGECGGG…QNNALSFNHG (175 aa)). A helical transmembrane segment spans residues 176–196 (MIFSLSASLGIVVILVVITIF). Topologically, residues 197–226 (KRGKQANELCQHEKLLQTPSVKISRKWSKR) are cytoplasmic. The helical transmembrane segment at 227-247 (ALLLGVLVGLCSSVWIFSSMH) threads the bilayer. The Extracellular segment spans residues 248–531 (ADVVARRIEN…FKHAPSLPWS (284 aa)). In terms of domain architecture, CHASE spans 295 to 519 (NPSAIDQKTF…GDPTRKHVMH (225 aa)). A helical membrane pass occupies residues 532–552 (AIMISSAVAIIVLLVGYIIYA). Topologically, residues 553-1187 (TLNSLEEAED…LEADATDPLT (635 aa)) are cytoplasmic. A Histidine kinase domain is found at 587–862 (TVSHEIRTPM…TFSFTAIFKE (276 aa)). Histidine 590 carries the phosphohistidine; by autocatalysis modification. 2 Response regulatory domains span residues 886 to 1017 (RALV…SKAL) and 1041 to 1178 (NILV…AHFL). 2 positions are modified to 4-aspartylphosphate: aspartate 942 and aspartate 1091.

In terms of processing, activation probably requires a transfer of a phosphate group between a His in the transmitter domain and an Asp of the receiver domain. Highly expressed in young leaves and at lower levels in roots, mature leaves, stems and spikelets.

It is found in the cell membrane. It carries out the reaction ATP + protein L-histidine = ADP + protein N-phospho-L-histidine.. In terms of biological role, cytokinin receptor related to bacterial two-component regulators. Functions as a histidine kinase and transmits the stress signal to a downstream MAPK cascade. This chain is Probable histidine kinase 5, found in Oryza sativa subsp. japonica (Rice).